A 304-amino-acid polypeptide reads, in one-letter code: N-acetylmuramic acid 6-phosphate etherase (304 aa).

One can recognise an SIS domain in the interval I62–K225. E90 (proton donor) is an active-site residue. The active site involves E121.

This sequence belongs to the GCKR-like family. MurNAc-6-P etherase subfamily. In terms of assembly, homodimer.

It catalyses the reaction N-acetyl-D-muramate 6-phosphate + H2O = N-acetyl-D-glucosamine 6-phosphate + (R)-lactate. It participates in amino-sugar metabolism; 1,6-anhydro-N-acetylmuramate degradation. It functions in the pathway amino-sugar metabolism; N-acetylmuramate degradation. The protein operates within cell wall biogenesis; peptidoglycan recycling. Functionally, specifically catalyzes the cleavage of the D-lactyl ether substituent of MurNAc 6-phosphate, producing GlcNAc 6-phosphate and D-lactate. Together with AnmK, is also required for the utilization of anhydro-N-acetylmuramic acid (anhMurNAc) either imported from the medium or derived from its own cell wall murein, and thus plays a role in cell wall recycling. This is N-acetylmuramic acid 6-phosphate etherase from Actinobacillus pleuropneumoniae serotype 7 (strain AP76).